The following is a 255-amino-acid chain: Acetylglutamate kinase (255 aa).

Residues 40–41 (GG), Arg-62, and Asn-153 each bind substrate.

It belongs to the acetylglutamate kinase family. ArgB subfamily.

The protein resides in the cytoplasm. It catalyses the reaction N-acetyl-L-glutamate + ATP = N-acetyl-L-glutamyl 5-phosphate + ADP. Its pathway is amino-acid biosynthesis; L-arginine biosynthesis; N(2)-acetyl-L-ornithine from L-glutamate: step 2/4. Catalyzes the ATP-dependent phosphorylation of N-acetyl-L-glutamate. The chain is Acetylglutamate kinase from Bacillus cereus (strain B4264).